Consider the following 359-residue polypeptide: Probable dual-specificity RNA methyltransferase RlmN (359 aa).

Glutamate 100 serves as the catalytic Proton acceptor. The Radical SAM core domain occupies 106–340; sequence TDKRLTVCVS…VSVRASRGRD (235 aa). The cysteines at positions 113 and 345 are disulfide-linked. Residues cysteine 120, cysteine 124, and cysteine 127 each coordinate [4Fe-4S] cluster. Residues 167-168, serine 197, 226-228, and asparagine 302 contribute to the S-adenosyl-L-methionine site; these read GE and SLH. Cysteine 345 acts as the S-methylcysteine intermediate in catalysis.

This sequence belongs to the radical SAM superfamily. RlmN family. It depends on [4Fe-4S] cluster as a cofactor.

The protein resides in the cytoplasm. The enzyme catalyses adenosine(2503) in 23S rRNA + 2 reduced [2Fe-2S]-[ferredoxin] + 2 S-adenosyl-L-methionine = 2-methyladenosine(2503) in 23S rRNA + 5'-deoxyadenosine + L-methionine + 2 oxidized [2Fe-2S]-[ferredoxin] + S-adenosyl-L-homocysteine. The catalysed reaction is adenosine(37) in tRNA + 2 reduced [2Fe-2S]-[ferredoxin] + 2 S-adenosyl-L-methionine = 2-methyladenosine(37) in tRNA + 5'-deoxyadenosine + L-methionine + 2 oxidized [2Fe-2S]-[ferredoxin] + S-adenosyl-L-homocysteine. In terms of biological role, specifically methylates position 2 of adenine 2503 in 23S rRNA and position 2 of adenine 37 in tRNAs. In Prochlorococcus marinus (strain NATL2A), this protein is Probable dual-specificity RNA methyltransferase RlmN.